The chain runs to 150 residues: MKVSAAARGRARHFAMQALYQWEMSGNALHVIEAEFHTDNDMSKVDVEYFHEILHGVAAIKSTLDETFKPFLTGLRLDEIDPVSLAVLRQACYEFEKRVDVPYKVVINEAVNLAKKFGAADSHKFINGVLDKVALRVRKDEVEAMRTGRS.

Belongs to the NusB family.

Functionally, involved in transcription antitermination. Required for transcription of ribosomal RNA (rRNA) genes. Binds specifically to the boxA antiterminator sequence of the ribosomal RNA (rrn) operons. This chain is Transcription antitermination protein NusB, found in Saccharophagus degradans (strain 2-40 / ATCC 43961 / DSM 17024).